The sequence spans 135 residues: Ig heavy chain V region XIG14 (135 aa).

A signal peptide spans 1 to 18 (DFIIFFIFMFFSPSCILS). One can recognise an Ig-like domain in the interval 20–128 (TLQESGPGTV…GYNFDYWGQG (109 aa)).

The chain is Ig heavy chain V region XIG14 from Xenopus laevis (African clawed frog).